Reading from the N-terminus, the 213-residue chain is EEF1A lysine methyltransferase 1 (213 aa).

The protein belongs to the class I-like SAM-binding methyltransferase superfamily. EFM5 family.

It is found in the cytoplasm. The catalysed reaction is L-lysyl-[protein] + 3 S-adenosyl-L-methionine = N(6),N(6),N(6)-trimethyl-L-lysyl-[protein] + 3 S-adenosyl-L-homocysteine + 3 H(+). Protein-lysine methyltransferase that selectively catalyzes the trimethylation of EEF1A at 'Lys-79'. This Gallus gallus (Chicken) protein is EEF1A lysine methyltransferase 1.